Here is a 345-residue protein sequence, read N- to C-terminus: Transcription factor 19 (345 aa).

The FHA domain occupies 31 to 88; it reads YRLGHRADLCDVALRPQQEPGLISGIHAELHAEPRGDDWRVSLEDHSSQGTLVNNVRL. Ser-78 carries the phosphoserine modification. The segment at 190–227 is disordered; sequence LTFSPSWGGPKSLPVPAPPGEMGTTPSAPPQRNRRKSV. Residues 293–342 form a PHD-type zinc finger; the sequence is AAPCCCLPQEETVAWVQCDGCDVWFHVACVGCSIQAAREADFRCPGCRAG. Residues Cys-296, Cys-298, Cys-310, Cys-313, His-318, Cys-321, Cys-336, and Cys-339 each contribute to the Zn(2+) site.

It localises to the nucleus. In terms of biological role, potential transcription factor that may play a role in the regulation of genes involved in cell cycle G1/S transition. May bind to regulatory elements of genes, including the promoter of the transcription factor FOXO1. This Homo sapiens (Human) protein is Transcription factor 19 (TCF19).